The following is a 301-amino-acid chain: tRNA dimethylallyltransferase (301 aa).

9–16 (GPTASGKS) provides a ligand contact to ATP. Residue 11 to 16 (TASGKS) participates in substrate binding. The tract at residues 34–37 (DSMQ) is interaction with substrate tRNA.

The protein belongs to the IPP transferase family. As to quaternary structure, monomer. Mg(2+) serves as cofactor.

The catalysed reaction is adenosine(37) in tRNA + dimethylallyl diphosphate = N(6)-dimethylallyladenosine(37) in tRNA + diphosphate. In terms of biological role, catalyzes the transfer of a dimethylallyl group onto the adenine at position 37 in tRNAs that read codons beginning with uridine, leading to the formation of N6-(dimethylallyl)adenosine (i(6)A). This is tRNA dimethylallyltransferase from Corynebacterium glutamicum (strain ATCC 13032 / DSM 20300 / JCM 1318 / BCRC 11384 / CCUG 27702 / LMG 3730 / NBRC 12168 / NCIMB 10025 / NRRL B-2784 / 534).